Consider the following 82-residue polypeptide: uncharacterized protein (82 aa).

Helical transmembrane passes span 1-21, 22-42, and 62-82; these read MSAS…SVST, VLLG…LAAF, and WRLL…LTLL.

The protein resides in the cell membrane. This is an uncharacterized protein from Stutzerimonas stutzeri (Pseudomonas stutzeri).